The primary structure comprises 198 residues: Recombination protein RecR (198 aa).

The segment at 57 to 72 adopts a C4-type zinc-finger fold; the sequence is CSVCGNLTDDDPCLIC. In terms of domain architecture, Toprim spans 80–175; that stretch reads SVILVVEDSK…KVTRLARGLA (96 aa).

It belongs to the RecR family.

Its function is as follows. May play a role in DNA repair. It seems to be involved in an RecBC-independent recombinational process of DNA repair. It may act with RecF and RecO. The chain is Recombination protein RecR from Streptococcus agalactiae serotype Ia (strain ATCC 27591 / A909 / CDC SS700).